A 113-amino-acid polypeptide reads, in one-letter code: MAGLKDVVTREYTINLHKRLHGVSFKKRAPRAVKEIKKFAKLHMGTEDVRLAPELNQAIWKRGVKGVEYRLRLRISRKRNEEEDAKNPLFSYVEPVLVASAKGLQTVVVEEDA.

It belongs to the eukaryotic ribosomal protein eL31 family. Component of the large ribosomal subunit (LSU). Mature yeast ribosomes consist of a small (40S) and a large (60S) subunit. The 40S small subunit contains 1 molecule of ribosomal RNA (18S rRNA) and 33 different proteins (encoded by 57 genes). The large 60S subunit contains 3 rRNA molecules (25S, 5.8S and 5S rRNA) and 46 different proteins (encoded by 81 genes).

The protein resides in the cytoplasm. Its function is as follows. Component of the ribosome, a large ribonucleoprotein complex responsible for the synthesis of proteins in the cell. The small ribosomal subunit (SSU) binds messenger RNAs (mRNAs) and translates the encoded message by selecting cognate aminoacyl-transfer RNA (tRNA) molecules. The large subunit (LSU) contains the ribosomal catalytic site termed the peptidyl transferase center (PTC), which catalyzes the formation of peptide bonds, thereby polymerizing the amino acids delivered by tRNAs into a polypeptide chain. The nascent polypeptides leave the ribosome through a tunnel in the LSU and interact with protein factors that function in enzymatic processing, targeting, and the membrane insertion of nascent chains at the exit of the ribosomal tunnel. In Saccharomyces cerevisiae (strain ATCC 204508 / S288c) (Baker's yeast), this protein is Large ribosomal subunit protein eL31B.